An 842-amino-acid polypeptide reads, in one-letter code: Translation initiation factor IF-2 (842 aa).

The interval Gln94–Val259 is disordered. Residues Ser96–Ala138 show a composition bias toward basic and acidic residues. A compositionally biased stretch (low complexity) spans Ala139–Pro148. A compositionally biased stretch (pro residues) spans Ala149–Ala159. Positions Pro160–Asp172 are enriched in low complexity. Composition is skewed to basic and acidic residues over residues Ala173–Ala202 and Thr226–Arg235. The segment covering Arg236–Gln249 has biased composition (basic residues). The tr-type G domain occupies Ser342 to Glu509. Residues Gly351–Thr358 form a G1 region. Gly351–Thr358 serves as a coordination point for GTP. Positions Gly376–His380 are G2. The segment at Asp397–Gly400 is G3. Residues Asp397–His401 and Asn451–Asp454 contribute to the GTP site. Residues Asn451 to Asp454 form a G4 region. The tract at residues Ser487–Lys489 is G5.

This sequence belongs to the TRAFAC class translation factor GTPase superfamily. Classic translation factor GTPase family. IF-2 subfamily.

Its subcellular location is the cytoplasm. One of the essential components for the initiation of protein synthesis. Protects formylmethionyl-tRNA from spontaneous hydrolysis and promotes its binding to the 30S ribosomal subunits. Also involved in the hydrolysis of GTP during the formation of the 70S ribosomal complex. This is Translation initiation factor IF-2 from Pseudomonas putida (strain GB-1).